The primary structure comprises 197 residues: Protein TIFY 9 (197 aa).

The span at 57–73 (STGNNSDSSAKSRSVPS) shows a compositional bias: polar residues. The segment at 57 to 84 (STGNNSDSSAKSRSVPSTPREDQPQIPI) is disordered. The region spanning 98 to 132 (LVSGTVPMTIFYNGSVSVFQVSRNKAGEIMKVANE) is the Tify domain. The short motif at 168 to 193 (PIARRKSLQRFLEKRKERLVSTSPYY) is the Jas element. The short motif at 170–177 (ARRKSLQR) is the Nuclear localization signal element.

The protein belongs to the TIFY/JAZ family. As to quaternary structure, homo- and heterodimer. Interacts with MYC2, MYC3, MYC4, AFPH2/NINJA, TIFY10A/JAZ1, TIFY10B/JAZ2, TIFY6B/JAZ3, TIFY6A/JAZ4, TIFY11B/JAZ6, TIFY5A/JAZ8, TIFY7/JAZ9, TIFY3A/JAZ11 and TIFY3B/JAZ12. Isoform 1 and isoform 2 interact with COI1. Isoform 3 does not interact with COI1. Interacts with RHD6 and RSL1. Post-translationally, ubiquitinated. Targeted for degradation by the SCF(COI1) E3 ubiquitin ligase-proteasome pathway during jasmonate signaling.

The protein localises to the nucleus. Its function is as follows. Repressor of jasmonate (JA) responses that lacks the entire Jas domain and possesses severe JA insensitivity and resistance to JA-induced degradation. Acts as an endogenous repressor of JA signal output in JA-stimulated cells. Modulator of JA-controlled growth inhibition in response to wounding. In terms of biological role, repressor of jasmonate (JA) responses that lacks part of the Jas domain and possesses JA insensitivity and partial resistance to JA-induced degradation. Repressor of jasmonate (JA) responses. Interacts with and suppresses RHD6 and RSL1 transcription factor activities to negatively regulate jasmonate-stimulated root hair development. The polypeptide is Protein TIFY 9 (TIFY9) (Arabidopsis thaliana (Mouse-ear cress)).